Consider the following 328-residue polypeptide: MLEDYYPSTTSYYHSGIDDDLYTAKWGMVMTFLDLNDSSLTPFEGTHFALIGFKSDKGVYINNGRVGAVESPAAIRTQLAKFPWHLGNQVMVYDVGNIDGPNRSLEQLQNSLSKAIKRMCDLNLKPIVLGGGHETAYGHYLGLRQSLSSSDDLAVINMDAHFDLRPYDQTGPNSGTGFRQMFDDAVADKRLFKYFVLGIQEHNNNLFLFDFVAKSKGIQFLTGQDIYQMGHQKVCRAIDRFLEGQERVYLTIDMDCFSVGAAPGVSAIQSLGVDPNLAVLVLQHIAASGKLVGFDVVEVSPPHDIDNHTANLAATFIFYLVQIMAQHN.

H133, D159, H161, D163, D253, and D255 together coordinate Mn(2+).

The protein belongs to the arginase family. Mn(2+) serves as cofactor.

The enzyme catalyses N-formimidoyl-L-glutamate + H2O = formamide + L-glutamate. It functions in the pathway amino-acid degradation; L-histidine degradation into L-glutamate; L-glutamate from N-formimidoyl-L-glutamate (hydrolase route): step 1/1. In terms of biological role, catalyzes the conversion of N-formimidoyl-L-glutamate to L-glutamate and formamide. The protein is Formimidoylglutamase of Streptococcus pyogenes serotype M3 (strain ATCC BAA-595 / MGAS315).